A 92-amino-acid polypeptide reads, in one-letter code: Cell wall protein CWP2 (92 aa).

The first 20 residues, 1 to 20 (MQFSTVASVAFVALANFVAA), serve as a signal peptide directing secretion. A PIR1/2/3 repeat occupies 24 to 37 (AAISQITDGQIQAT). The tract at residues 41–60 (TTEATTTAAPSSTVETVSPS) is disordered. N71 carries GPI-anchor amidated asparagine lipidation. Positions 72 to 92 (GAAKAAVGMGAGALAAAAMLL) are cleaved as a propeptide — removed in mature form.

It belongs to the SRP1/TIP1 family. In terms of processing, extensively O-glycosylated. Post-translationally, the GPI-anchor is attached to the protein in the endoplasmic reticulum and serves to target the protein to the cell surface. There, the glucosamine-inositol phospholipid moiety is cleaved off and the GPI-modified mannoprotein is covalently attached via its lipidless GPI glycan remnant to the 1,6-beta-glucan of the outer cell wall layer. Covalently linked to beta-1,3-glucan of the inner cell wall layer via an alkali-sensitive ester linkage between the gamma-carboxyl group of glutamic acids, arising from a specific glutamine within the PIR1/2/3 repeat, and hydroxyl groups of glucoses of beta-1,3-glucan chains.

It localises to the secreted. Its subcellular location is the cell wall. The protein localises to the membrane. In terms of biological role, component of the cell wall. The polypeptide is Cell wall protein CWP2 (CWP2) (Saccharomyces cerevisiae (strain ATCC 204508 / S288c) (Baker's yeast)).